We begin with the raw amino-acid sequence, 468 residues long: 6-phospho-beta-galactosidase (468 aa).

The D-galactose 6-phosphate site is built by glutamine 19, histidine 116, asparagine 159, glutamate 160, and asparagine 297. Glutamate 160 acts as the Proton donor in catalysis. Catalysis depends on glutamate 375, which acts as the Nucleophile. The D-galactose 6-phosphate site is built by serine 428, tryptophan 429, lysine 435, and tyrosine 437.

The protein belongs to the glycosyl hydrolase 1 family.

The catalysed reaction is a 6-phospho-beta-D-galactoside + H2O = D-galactose 6-phosphate + an alcohol. It functions in the pathway carbohydrate metabolism; lactose degradation; D-galactose 6-phosphate and beta-D-glucose from lactose 6-phosphate: step 1/1. The chain is 6-phospho-beta-galactosidase from Streptococcus gordonii (strain Challis / ATCC 35105 / BCRC 15272 / CH1 / DL1 / V288).